The primary structure comprises 1941 residues: Diacylglycerol kinase eta (1941 aa).

Residues 93-186 form the PH domain; the sequence is SIIKEGYLLK…WLGSLKAATA (94 aa). 2 Phorbol-ester/DAG-type zinc fingers span residues 206 to 256 and 279 to 330; these read HHHW…IANC and PHQW…AIAC. Residues 361–497 enclose the DAGKc domain; that stretch reads GNFSPLLVFV…DRWSIMVFEK (137 aa). Disordered stretches follow at residues 1030–1068, 1132–1164, 1215–1257, and 1276–1295; these read TTTL…SPPR, CNSN…ETPT, LESA…PSSS, and RRHS…KDKD. A compositionally biased stretch (low complexity) spans 1133–1155; the sequence is NSNNNSNNNSNSNSNNNNHNDGN. Positions 1878–1941 constitute an SAM domain; the sequence is WSVNEVVTWL…LQAIKDLSEN (64 aa).

The protein belongs to the eukaryotic diacylglycerol kinase family.

It localises to the cytoplasm. It catalyses the reaction a 1,2-diacyl-sn-glycerol + ATP = a 1,2-diacyl-sn-glycero-3-phosphate + ADP + H(+). In terms of biological role, phosphorylates diacylglycerol (DAG) to generate phosphatidic acid (PA). This chain is Diacylglycerol kinase eta, found in Drosophila grimshawi (Hawaiian fruit fly).